Consider the following 267-residue polypeptide: L-aspartate dehydrogenase (267 aa).

Ala124 and Asn190 together coordinate NAD(+). His218 is an active-site residue.

It belongs to the L-aspartate dehydrogenase family.

The catalysed reaction is L-aspartate + NADP(+) + H2O = oxaloacetate + NH4(+) + NADPH + H(+). It carries out the reaction L-aspartate + NAD(+) + H2O = oxaloacetate + NH4(+) + NADH + H(+). It functions in the pathway cofactor biosynthesis; NAD(+) biosynthesis; iminoaspartate from L-aspartate (dehydrogenase route): step 1/1. Its function is as follows. Specifically catalyzes the NAD or NADP-dependent dehydrogenation of L-aspartate to iminoaspartate. The protein is L-aspartate dehydrogenase of Methanococcus maripaludis (strain C7 / ATCC BAA-1331).